Consider the following 341-residue polypeptide: Putative UPF0607 protein ENSP00000383144 (341 aa).

Disordered regions lie at residues 70–131 and 218–279; these read RLPK…NPRP and LMVG…PPAK. A compositionally biased stretch (basic and acidic residues) spans 72–101; sequence PKTEVRAEEPKEATEVKDQVETQEQEDNKR. Over residues 108-127 the composition is skewed to polar residues; the sequence is EAASTSRPLETQGNLTSSWY. The span at 243-252 shows a compositional bias: basic residues; it reads AGHRSHKRKL.

This sequence belongs to the UPF0607 family.

The chain is Putative UPF0607 protein ENSP00000383144 from Homo sapiens (Human).